The sequence spans 517 residues: GMP synthase [glutamine-hydrolyzing] (517 aa).

A Glutamine amidotransferase type-1 domain is found at 9 to 199 (RILILDFGSQ…VLGICGCERL (191 aa)). Cys-86 (nucleophile) is an active-site residue. Active-site residues include His-173 and Glu-175. Positions 200–392 (WTSESIIEDA…LGLPYEMLYR (193 aa)) constitute a GMPS ATP-PPase domain. 227 to 233 (SGGVDSS) contributes to the ATP binding site.

Homodimer.

The enzyme catalyses XMP + L-glutamine + ATP + H2O = GMP + L-glutamate + AMP + diphosphate + 2 H(+). It participates in purine metabolism; GMP biosynthesis; GMP from XMP (L-Gln route): step 1/1. Its function is as follows. Catalyzes the synthesis of GMP from XMP. In Vibrio vulnificus (strain CMCP6), this protein is GMP synthase [glutamine-hydrolyzing].